A 480-amino-acid chain; its full sequence is 3-isopropylmalate dehydratase large subunit (480 aa).

[4Fe-4S] cluster-binding residues include cysteine 357, cysteine 417, and cysteine 420. A compositionally biased stretch (polar residues) spans 431–441 (GQRCASTSNRN). Residues 431-454 (GQRCASTSNRNFEGRQGKGGRTHL) are disordered.

This sequence belongs to the aconitase/IPM isomerase family. LeuC type 1 subfamily. In terms of assembly, heterodimer of LeuC and LeuD. Requires [4Fe-4S] cluster as cofactor.

It catalyses the reaction (2R,3S)-3-isopropylmalate = (2S)-2-isopropylmalate. The protein operates within amino-acid biosynthesis; L-leucine biosynthesis; L-leucine from 3-methyl-2-oxobutanoate: step 2/4. Its function is as follows. Catalyzes the isomerization between 2-isopropylmalate and 3-isopropylmalate, via the formation of 2-isopropylmaleate. This Mycobacteroides abscessus (strain ATCC 19977 / DSM 44196 / CCUG 20993 / CIP 104536 / JCM 13569 / NCTC 13031 / TMC 1543 / L948) (Mycobacterium abscessus) protein is 3-isopropylmalate dehydratase large subunit.